The chain runs to 549 residues: Small ribosomal subunit protein bS1 (549 aa).

S1 motif domains follow at residues 21–87, 105–171, 192–260, 277–347, 364–434, and 451–512; these read GSIV…LSRE, KATV…VSRR, GSEV…LGLK, NSKL…LGLK, GDKV…LGIK, and GAVV…LSVK.

The protein belongs to the bacterial ribosomal protein bS1 family.

Functionally, binds mRNA; thus facilitating recognition of the initiation point. It is needed to translate mRNA with a short Shine-Dalgarno (SD) purine-rich sequence. The sequence is that of Small ribosomal subunit protein bS1 (rpsA) from Haemophilus influenzae (strain ATCC 51907 / DSM 11121 / KW20 / Rd).